A 344-amino-acid chain; its full sequence is DNA fragmentation factor subunit beta (344 aa).

The 77-residue stretch at 7–83 (QPKCVKLRAL…LLTAGETWHG (77 aa)) folds into the CIDE-N domain.

In terms of assembly, heterodimer of DFFA and DFFB. Interacts with H1-1.

It localises to the cytoplasm. The protein localises to the nucleus. Its activity is regulated as follows. Inhibited by DFFA (DFF45). Nuclease that induces DNA fragmentation and chromatin condensation during apoptosis. Degrades naked DNA and induces apoptotic morphology. This chain is DNA fragmentation factor subunit beta (Dffb), found in Mus musculus (Mouse).